Here is a 112-residue protein sequence, read N- to C-terminus: UPF0482 protein SG1468 (112 aa).

The signal sequence occupies residues 1-22 (MNTIPTRCLLGGLLALSLLAYA).

The protein belongs to the UPF0482 family.

The sequence is that of UPF0482 protein SG1468 from Sodalis glossinidius (strain morsitans).